Here is a 247-residue protein sequence, read N- to C-terminus: Probable 2-phosphosulfolactate phosphatase (247 aa).

The protein belongs to the ComB family. The cofactor is Mg(2+).

It carries out the reaction (2R)-O-phospho-3-sulfolactate + H2O = (2R)-3-sulfolactate + phosphate. In Clostridium perfringens (strain 13 / Type A), this protein is Probable 2-phosphosulfolactate phosphatase.